A 180-amino-acid polypeptide reads, in one-letter code: Ribosome maturation factor RimM (180 aa).

The 73-residue stretch at 97–169 folds into the PRC barrel domain; the sequence is PGELSWDFFV…IITVDLPEGL (73 aa).

Belongs to the RimM family. In terms of assembly, binds ribosomal protein uS19.

It is found in the cytoplasm. Its function is as follows. An accessory protein needed during the final step in the assembly of 30S ribosomal subunit, possibly for assembly of the head region. Essential for efficient processing of 16S rRNA. May be needed both before and after RbfA during the maturation of 16S rRNA. It has affinity for free ribosomal 30S subunits but not for 70S ribosomes. The protein is Ribosome maturation factor RimM of Bacteroides fragilis (strain YCH46).